Consider the following 185-residue polypeptide: Histone H1-delta (185 aa).

Disordered stretches follow at residues 1–37 (MADT…PKYS) and 90–185 (RHVK…GKKK). Residues 32–105 (SHPKYSDMIA…GASGSFLLAE (74 aa)) enclose the H15 domain. Basic residues predominate over residues 109-185 (TPKKAAAKKA…KAAKGKGKKK (77 aa)).

Belongs to the histone H1/H5 family.

It localises to the nucleus. The protein resides in the chromosome. Functionally, histones H1 are necessary for the condensation of nucleosome chains into higher-order structures. This chain is Histone H1-delta, found in Strongylocentrotus purpuratus (Purple sea urchin).